The sequence spans 189 residues: Peptidyl-tRNA hydrolase (189 aa).

Tyrosine 14 contacts tRNA. Histidine 19 acts as the Proton acceptor in catalysis. Positions 64, 66, and 112 each coordinate tRNA.

The protein belongs to the PTH family. In terms of assembly, monomer.

It is found in the cytoplasm. The enzyme catalyses an N-acyl-L-alpha-aminoacyl-tRNA + H2O = an N-acyl-L-amino acid + a tRNA + H(+). In terms of biological role, hydrolyzes ribosome-free peptidyl-tRNAs (with 1 or more amino acids incorporated), which drop off the ribosome during protein synthesis, or as a result of ribosome stalling. Its function is as follows. Catalyzes the release of premature peptidyl moieties from peptidyl-tRNA molecules trapped in stalled 50S ribosomal subunits, and thus maintains levels of free tRNAs and 50S ribosomes. In Clostridium botulinum (strain ATCC 19397 / Type A), this protein is Peptidyl-tRNA hydrolase.